The following is a 186-amino-acid chain: Large ribosomal subunit protein uL5m (186 aa).

Belongs to the universal ribosomal protein uL5 family.

Its subcellular location is the mitochondrion. This is Large ribosomal subunit protein uL5m (RPL5) from Solanum tuberosum (Potato).